Here is a 376-residue protein sequence, read N- to C-terminus: Enoyl-[acyl-carrier-protein] reductase, mitochondrial (376 aa).

Residues 1–12 (MLRTLRTSQLAR) constitute a mitochondrion transit peptide. The active-site Proton donor is the Y79. Residues N160, 183 to 186 (NSGV), 206 to 208 (RDR), 277 to 280 (YGGM), 302 to 304 (YWL), and K368 contribute to the NADP(+) site.

It belongs to the zinc-containing alcohol dehydrogenase family. Quinone oxidoreductase subfamily. In terms of assembly, homodimer.

The protein localises to the mitochondrion matrix. The catalysed reaction is a 2,3-saturated acyl-[ACP] + NADP(+) = a (2E)-enoyl-[ACP] + NADPH + H(+). Functionally, catalyzes the NADPH-dependent reduction of trans-2-enoyl thioesters in mitochondrial fatty acid synthesis (fatty acid synthesis type II). Fatty acid chain elongation in mitochondria uses acyl carrier protein (ACP) as an acyl group carrier, but the enzyme accepts both ACP and CoA thioesters as substrates in vitro. Required for respiration and the maintenance of the mitochondrial compartment. This is Enoyl-[acyl-carrier-protein] reductase, mitochondrial (ETR1) from Yarrowia lipolytica (strain CLIB 122 / E 150) (Yeast).